We begin with the raw amino-acid sequence, 103 residues long: UPF0058 protein MJ1205 (103 aa).

The protein belongs to the UPF0058 family.

The protein is UPF0058 protein MJ1205 of Methanocaldococcus jannaschii (strain ATCC 43067 / DSM 2661 / JAL-1 / JCM 10045 / NBRC 100440) (Methanococcus jannaschii).